The following is a 260-amino-acid chain: E3 ubiquitin-protein ligase SRFP1 (260 aa).

Residues 11-80 (FGRMGFGCKH…VAQVCYNCGV (70 aa)) form a CHY-type zinc finger. Zn(2+) is bound by residues cysteine 18, histidine 20, cysteine 31, cysteine 32, cysteine 38, cysteine 41, histidine 42, histidine 50, cysteine 62, cysteine 65, cysteine 75, cysteine 78, cysteine 87, cysteine 90, histidine 103, cysteine 104, cysteine 107, cysteine 110, histidine 120, cysteine 121, cysteine 124, cysteine 127, histidine 136, and cysteine 138. The CTCHY-type zinc finger occupies 82–146 (MGEYFCSACK…CCIENSMKNN (65 aa)). An RING-type; atypical zinc finger spans residues 147–190 (CPICYEYLFDSLRETSVLRCGHTMHLQCFHEMLKHDKFSCPICS).

In terms of tissue distribution, expressed in roots, leaves, nodes and panicles.

It is found in the nucleus. The protein localises to the cytoplasm. It carries out the reaction S-ubiquitinyl-[E2 ubiquitin-conjugating enzyme]-L-cysteine + [acceptor protein]-L-lysine = [E2 ubiquitin-conjugating enzyme]-L-cysteine + N(6)-ubiquitinyl-[acceptor protein]-L-lysine.. It functions in the pathway protein modification; protein ubiquitination. In terms of biological role, possesses E3 ubiquitin-protein ligase activity in vitro. Possesses transactivation activity in yeast cells. May modulate abiotic stress responses by negatively regulating antioxidant enzymes-mediated reactive oxygen species (ROS) removal. This chain is E3 ubiquitin-protein ligase SRFP1, found in Oryza sativa subsp. japonica (Rice).